A 1430-amino-acid polypeptide reads, in one-letter code: Transport and Golgi organization protein 1 (1430 aa).

The first 34 residues, 1-34 (MRLTNEKATMQPQLSDLALVLGLLICCLPTLTWA), serve as a signal peptide directing secretion. Over 35–796 (ATLSDKRLCA…ADKLVDHSQL (762 aa)) the chain is Extracellular. The region spanning 50 to 112 (QIISMGIAKI…NKDFIMEKKI (63 aa)) is the SH3 domain. 5 disordered regions span residues 253 to 272 (QEEP…PPLP), 284 to 303 (DFDY…SQDN), 318 to 362 (ESIE…SLPT), 445 to 524 (SDAE…DQQK), and 568 to 673 (EEAE…TDNH). Acidic residues predominate over residues 284 to 296 (DFDYGDDETDDDS). Basic and acidic residues-rich tracts occupy residues 331-357 (KKTD…KQED), 497-524 (LQEE…DQQK), and 568-588 (EEAE…RSSE). The stretch at 494-620 (YKQLQEEQEK…QSNEIVDNNN (127 aa)) forms a coiled coil. Residues 594-621 (LSVQEANMQQLNDSVDSQSNEIVDNNNR) show a composition bias toward polar residues. Residues 640–651 (HPSTASHTTPTP) show a composition bias toward low complexity. Residues 797–817 (LLCVVIAAISSLFFMFAYYCF) form a helical membrane-spanning segment. Over 818–1430 (CNSSQEGALL…SATSRPYSEV (613 aa)) the chain is Cytoplasmic. S865 and S868 each carry phosphoserine. Residues 869-1245 (NDMVADLKKQ…SLRRKLTTMA (377 aa)) are a coiled coil. Low complexity predominate over residues 1105–1114 (SQLQQSSQDV). 2 disordered regions span residues 1105 to 1126 (SQLQ…QSER) and 1312 to 1430 (LPPT…YSEV). Basic and acidic residues predominate over residues 1115 to 1126 (EQLKQDFNQSER). Residues 1321–1334 (RPPPLGRMRSPPPS) are compositionally biased toward pro residues. A compositionally biased stretch (basic and acidic residues) spans 1336-1346 (RGDRDRERYSD). Phosphoserine occurs at positions 1345 and 1348. The span at 1348–1361 (SDYDDYDDDEEDDR) shows a compositional bias: acidic residues. Over residues 1364-1380 (DRRRRHSGSWGRRHRGS) the composition is skewed to basic residues. The segment covering 1387 to 1402 (TYRSLSPSDSRYNYND) has biased composition (polar residues). 2 positions are modified to phosphoserine: S1390 and S1392. Residues 1408–1417 (SPPPSPPPVP) show a composition bias toward pro residues. A compositionally biased stretch (polar residues) spans 1420-1430 (RSATSRPYSEV).

This sequence belongs to the MIA/OTOR family. Tango1 subfamily.

Its subcellular location is the golgi apparatus membrane. The protein localises to the golgi apparatus. It is found in the trans-Golgi network. Required for protein secretion. May participate in cargo loading by binding to COPII coat subunits and guiding SH3-bound proteins into a growing carrier. At basal transitional ER sites in follicle epithelial cells, mediates the exit of basal membrane protein such as vkg, LanB1 and Trol, from the endoplasmic reticulum (ER) to basal Golgi clusters. The chain is Transport and Golgi organization protein 1 from Drosophila melanogaster (Fruit fly).